Here is a 480-residue protein sequence, read N- to C-terminus: Aspartyl/glutamyl-tRNA(Asn/Gln) amidotransferase subunit B (480 aa).

It belongs to the GatB/GatE family. GatB subfamily. In terms of assembly, heterotrimer of A, B and C subunits.

It catalyses the reaction L-glutamyl-tRNA(Gln) + L-glutamine + ATP + H2O = L-glutaminyl-tRNA(Gln) + L-glutamate + ADP + phosphate + H(+). The catalysed reaction is L-aspartyl-tRNA(Asn) + L-glutamine + ATP + H2O = L-asparaginyl-tRNA(Asn) + L-glutamate + ADP + phosphate + 2 H(+). In terms of biological role, allows the formation of correctly charged Asn-tRNA(Asn) or Gln-tRNA(Gln) through the transamidation of misacylated Asp-tRNA(Asn) or Glu-tRNA(Gln) in organisms which lack either or both of asparaginyl-tRNA or glutaminyl-tRNA synthetases. The reaction takes place in the presence of glutamine and ATP through an activated phospho-Asp-tRNA(Asn) or phospho-Glu-tRNA(Gln). This chain is Aspartyl/glutamyl-tRNA(Asn/Gln) amidotransferase subunit B, found in Saccharophagus degradans (strain 2-40 / ATCC 43961 / DSM 17024).